A 135-amino-acid chain; its full sequence is Beta-galactoside-binding lectin (135 aa).

At serine 2 the chain carries N-acetylserine. Cysteines 3 and 8 form a disulfide. A Galectin domain is found at 5–135 (GPVCTNLGLK…DFTLRSVSWE (131 aa)). A beta-D-galactoside is bound by residues 46–50 (HFNPR), histidine 54, asparagine 63, 70–73 (WGTE), and 70–76 (WGTEQRE).

Homodimer; disulfide-linked. As to quaternary structure, (Microbial infection) Interacts with newcastle disease virus protein HN; this interaction inhibits viral adsorption rather than internalization. As to expression, mainly in the intestine (adult), mainly in the skin (embryo).

Functionally, this protein binds beta-galactoside. May participate in host antiviral defense through specific interaction with glycans on the viral envelope glycoproteins. The chain is Beta-galactoside-binding lectin (CG-1B) from Gallus gallus (Chicken).